A 165-amino-acid polypeptide reads, in one-letter code: RxLR effector protein PITG_09218 (165 aa).

Residues 1-24 (MRFSAFLTLLLVAFVASCSTFASA) form the signal peptide. Residues 31–57 (RRLRADAAPVPVNKDNVAKLAGGFLEK) carry the RxLR-dEER motif. The chain crosses the membrane as a helical span at residues 129–149 (VTLGATVAGFAIYGAYKALFD).

This sequence belongs to the RxLR effector family.

The protein resides in the secreted. Its subcellular location is the host mitochondrion membrane. It localises to the host endoplasmic reticulum membrane. Its function is as follows. Effector that enhances P.infestans colonization of Nicotiana benthamiana leaves. This Phytophthora infestans (strain T30-4) (Potato late blight agent) protein is RxLR effector protein PITG_09218.